We begin with the raw amino-acid sequence, 467 residues long: Cytochrome c-552 (467 aa).

Positions Met1–Ala27 are cleaved as a signal peptide. A heme c-binding site is contributed by His87. Positions 115, 118, and 119 each coordinate heme. Heme c contacts are provided by Cys153, Cys156, His157, Cys195, Cys198, and His199. Residues Glu201, Tyr202, Lys250, and Gln252 each contribute to the Ca(2+) site. A substrate-binding site is contributed by Tyr202. His253 lines the substrate pocket. Residues His264, Cys271, Cys274, His275, His290, Cys303, Cys306, His307, and His382 each contribute to the heme c site.

The protein belongs to the cytochrome c-552 family. It depends on Ca(2+) as a cofactor. Heme c is required as a cofactor.

The protein localises to the periplasm. The enzyme catalyses 6 Fe(III)-[cytochrome c] + NH4(+) + 2 H2O = 6 Fe(II)-[cytochrome c] + nitrite + 8 H(+). It functions in the pathway nitrogen metabolism; nitrate reduction (assimilation). Its function is as follows. Catalyzes the reduction of nitrite to ammonia, consuming six electrons in the process. The sequence is that of Cytochrome c-552 from Shewanella sp. (strain MR-4).